The following is a 58-amino-acid chain: Small ribosomal subunit protein bS21 (58 aa).

Belongs to the bacterial ribosomal protein bS21 family.

This is Small ribosomal subunit protein bS21 from Streptococcus pyogenes serotype M49 (strain NZ131).